The sequence spans 118 residues: UPF0102 protein Arth_2474 (118 aa).

This sequence belongs to the UPF0102 family.

The sequence is that of UPF0102 protein Arth_2474 from Arthrobacter sp. (strain FB24).